The chain runs to 203 residues: Transcriptional regulator GfcR 2 (203 aa).

The protein belongs to the purine/pyrimidine phosphoribosyltransferase family. GfcR subfamily.

The chain is Transcriptional regulator GfcR 2 from Methanosarcina acetivorans (strain ATCC 35395 / DSM 2834 / JCM 12185 / C2A).